The sequence spans 411 residues: Serpin A3-3 (411 aa).

A signal peptide spans 1–24 (MRAERLSPLLALGLLVAGIRSVHC). 5 N-linked (GlcNAc...) asparagine glycosylation sites follow: Asn100, Asn180, Asn230, Asn264, and Asn318.

It belongs to the serpin family. Homodimer.

It localises to the cytoplasmic vesicle. The protein localises to the secretory vesicle. The protein resides in the chromaffin granule. Its subcellular location is the secreted. Serine protease inhibitor. Strongly inhibits elastase and trypsin stoichiometrically at the molar ratio of 1:1. Acts as a moderate inhibitor of plasmin and chymotrypsin. Does not inhibit thrombin, urokinase, kallikrein, tissue plasminogen activator, cathepsin G or the cysteine proteases papain, cathepsin B or cathepsin L. The polypeptide is Serpin A3-3 (SERPINA3-3) (Bos taurus (Bovine)).